The primary structure comprises 184 residues: Nucleoporin-62 C-terminal-like protein (184 aa).

Positions R117–L151 form a coiled coil.

This sequence belongs to the nucleoporin NSP1/NUP62 family.

The protein is Nucleoporin-62 C-terminal-like protein (NUP62CL) of Homo sapiens (Human).